An 82-amino-acid chain; its full sequence is RNA-binding protein Hfq (82 aa).

Residues 11–71 (DTFLNHVRKT…ISTIMPGAPI (61 aa)) form the Sm domain.

This sequence belongs to the Hfq family. In terms of assembly, homohexamer.

Functionally, RNA chaperone that binds small regulatory RNA (sRNAs) and mRNAs to facilitate mRNA translational regulation in response to envelope stress, environmental stress and changes in metabolite concentrations. Also binds with high specificity to tRNAs. The polypeptide is RNA-binding protein Hfq (Bradyrhizobium diazoefficiens (strain JCM 10833 / BCRC 13528 / IAM 13628 / NBRC 14792 / USDA 110)).